Reading from the N-terminus, the 407-residue chain is MNDTERNMVERTSKFLLIVVGSVFFMLILYQYVAPGVINFGSPHGYLLGEEDMTIFPTPDPHYVKKYYFPIKDLERKIDFEIKGEDVIVFLHIQKTGGTTFGRHLVQNVRLELPCDCRPGQKKCTCYRPNRKETWLFSRFSTGWSCGLHADWTELTNCVPGVLNKRESKSKKMRKFYYITLLRDPVSRYLSEWRHVQRGATWKTSLHMCDGRTPTPEELPPCYEGTDWSGCTLQQFMDCPYNLANNRQVRMLADLSLVGCYNLSTVPEKRRSQLLLESAKKNLRDMAFYGLTEFQRKTQYLFERTFHLKFIRPFMQYNSTRAAGVDLDNDTIQRIEELNDLDMKLYDYAKDLFQQRYQYKHMLDRREQRLLRGHASFHSPFREDGAGGEGTARLPTEDYMNHIINGW.

The Cytoplasmic portion of the chain corresponds to 8 to 14 (MVERTSK). A helical; Signal-anchor for type II membrane protein membrane pass occupies residues 15 to 35 (FLLIVVGSVFFMLILYQYVAP). The Lumenal segment spans residues 36 to 407 (GVINFGSPHG…DYMNHIINGW (372 aa)). 92-100 (HIQKTGGTT) is a binding site for 3'-phosphoadenylyl sulfate. Residues 122-123 (KK), R139, W144, and H149 each bind substrate. The active-site Proton acceptor is the H149. 3'-phosphoadenylyl sulfate contacts are provided by R183 and S191. Residues H195 and W202 each coordinate substrate. Residue N262 is glycosylated (N-linked (GlcNAc...) asparagine). 315-317 (MQY) contributes to the 3'-phosphoadenylyl sulfate binding site. A glycan (N-linked (GlcNAc...) asparagine) is linked at N318. 321 to 322 (RA) is a 3'-phosphoadenylyl sulfate binding site. N-linked (GlcNAc...) asparagine glycosylation occurs at N329.

This sequence belongs to the sulfotransferase 6 family. During early somitogenesis, first expressed in floor plate and somites. During mid-somitogenesis, expressed strongly in somites and more weakly in eye and hindbrain. During late somitogenesis, expressed in eye, hindbrain and posterior somites. At 24 hours post-fertilization (hpf), expressed in lens, forebrain, hindbrain, otic vesicle, anterior spinal cord neurons and posterior somites. At 36 hpf, expressed in the retinal ciliary marginal zone, brain, pancreas and weakly in pectoral fin. At 48 hpf, expressed in the retinal ciliary marginal zone, retinal ganglion cells, rhombomeres, otic vesicle and weakly in pectoral fin.

The protein resides in the membrane. It catalyses the reaction alpha-D-glucosaminyl-[heparan sulfate](n) + 3'-phosphoadenylyl sulfate = 6-sulfo-alpha-D-glucosaminyl-[heparan sulfate](n) + adenosine 3',5'-bisphosphate + H(+). Its function is as follows. 6-O-sulfation enzyme which catalyzes the transfer of sulfate from 3'-phosphoadenosine 5'-phosphosulfate (PAPS) to position 6 of the N-sulfoglucosamine residue (GlcNS) of heparan sulfate. In Danio rerio (Zebrafish), this protein is Heparan-sulfate 6-O-sulfotransferase 1-B.